A 218-amino-acid polypeptide reads, in one-letter code: Ras-related protein R-Ras (218 aa).

Residues 1–30 form a disordered region; that stretch reads MSSGAASGTGRGRPRGGGPGPGDPPPSETH. Gly residues predominate over residues 7 to 20; the sequence is SGTGRGRPRGGGPG. GTP is bound at residue 36–44; that stretch reads GGGGVGKSA. Positions 58–66 match the Effector region motif; sequence YDPTIEDSY. GTP contacts are provided by residues 83–87, 142–145, and 172–174; these read DTAGQ, NKAD, and SAK. Cys215 carries the cysteine methyl ester modification. A lipid anchor (S-geranylgeranyl cysteine) is attached at Cys215. The propeptide at 216-218 is removed in mature form; that stretch reads VLL.

This sequence belongs to the small GTPase superfamily. Ras family. In terms of assembly, interacts with PLCE1. Interacts (active GTP-bound form preferentially) with RGS14. Interacts with OSBPL3. Interacts with ZDHHC19. Post-translationally, S-palmitoylated by ZDHHC19, leading to increased association with membranes and with rafts/caveolae as well as enhanced cell viability.

Its subcellular location is the cell membrane. The enzyme catalyses GTP + H2O = GDP + phosphate + H(+). In terms of biological role, GTP-binding protein with GTPase activity, likely involved in the regulation of MAPK signaling pathway and thereby controlling multiple cellular processes. Regulates the organization of the actin cytoskeleton. With OSPBL3, modulates integrin beta-1 (ITGB1) activity. This chain is Ras-related protein R-Ras (RRAS), found in Homo sapiens (Human).